We begin with the raw amino-acid sequence, 387 residues long: Succinate--CoA ligase [ADP-forming] subunit beta (387 aa).

Positions 9-245 constitute an ATP-grasp domain; that stretch reads KDLLESYGLK…KSQENAKELK (237 aa). ATP is bound by residues lysine 46, 53–55, glutamate 100, tyrosine 103, and glutamate 108; that span reads GRG. Asparagine 200 and aspartate 214 together coordinate Mg(2+). Residues asparagine 265 and 322-324 contribute to the substrate site; that span reads GIV.

The protein belongs to the succinate/malate CoA ligase beta subunit family. As to quaternary structure, heterotetramer of two alpha and two beta subunits. Requires Mg(2+) as cofactor.

It catalyses the reaction succinate + ATP + CoA = succinyl-CoA + ADP + phosphate. It carries out the reaction GTP + succinate + CoA = succinyl-CoA + GDP + phosphate. It functions in the pathway carbohydrate metabolism; tricarboxylic acid cycle; succinate from succinyl-CoA (ligase route): step 1/1. In terms of biological role, succinyl-CoA synthetase functions in the citric acid cycle (TCA), coupling the hydrolysis of succinyl-CoA to the synthesis of either ATP or GTP and thus represents the only step of substrate-level phosphorylation in the TCA. The beta subunit provides nucleotide specificity of the enzyme and binds the substrate succinate, while the binding sites for coenzyme A and phosphate are found in the alpha subunit. The polypeptide is Succinate--CoA ligase [ADP-forming] subunit beta (Francisella tularensis subsp. novicida (strain U112)).